We begin with the raw amino-acid sequence, 688 residues long: DNA ligase (688 aa).

Residues 38–42, 87–88, and Glu118 contribute to the NAD(+) site; these read DEEYD and SL. Residue Lys120 is the N6-AMP-lysine intermediate of the active site. Residues Arg141, Glu175, Lys291, and Lys315 each contribute to the NAD(+) site. Zn(2+)-binding residues include Cys409, Cys412, Cys428, and Cys433. The BRCT domain occupies 590 to 679; that stretch reads MKLDILKGLT…AELKGYNFDE (90 aa).

It belongs to the NAD-dependent DNA ligase family. LigA subfamily. Mg(2+) serves as cofactor. Mn(2+) is required as a cofactor.

The enzyme catalyses NAD(+) + (deoxyribonucleotide)n-3'-hydroxyl + 5'-phospho-(deoxyribonucleotide)m = (deoxyribonucleotide)n+m + AMP + beta-nicotinamide D-nucleotide.. In terms of biological role, DNA ligase that catalyzes the formation of phosphodiester linkages between 5'-phosphoryl and 3'-hydroxyl groups in double-stranded DNA using NAD as a coenzyme and as the energy source for the reaction. It is essential for DNA replication and repair of damaged DNA. The polypeptide is DNA ligase (Thermotoga petrophila (strain ATCC BAA-488 / DSM 13995 / JCM 10881 / RKU-1)).